The chain runs to 458 residues: O-acyltransferase WSD (458 aa).

Histidine 133 (proton acceptor) is an active-site residue.

It belongs to the long-chain O-acyltransferase family.

It carries out the reaction a long chain fatty alcohol + a fatty acyl-CoA = a wax ester + CoA. The catalysed reaction is an acyl-CoA + a 1,2-diacyl-sn-glycerol = a triacyl-sn-glycerol + CoA. It participates in glycerolipid metabolism; triacylglycerol biosynthesis. Bifunctional wax ester synthase/diacylglycerol acyltransferase (WS and DGAT). Catalyzes the terminal and only committed step in triacylglycerol synthesis by using diacylglycerol and fatty acyl CoA as substrates. Required for storage lipid synthesis. WS uses C(12)-CoA to C(18)-CoA substrates whereas DGAT prefers C(20)-CoA. Upon expression in E.coli and Pseudomonas citronellolis (DSM 50332) both WS and DGAT activities increase. The chain is O-acyltransferase WSD (wax-dgaT) from Acinetobacter baylyi (strain ATCC 33305 / BD413 / ADP1).